Consider the following 676-residue polypeptide: Polyunsaturated fatty acid lipoxygenase ALOX15B (676 aa).

In terms of domain architecture, PLAT spans A2–K124. Ca(2+) contacts are provided by G15, G17, D39, N40, G42, E44, D85, and A86. The 552-residue stretch at V125 to I676 folds into the Lipoxygenase domain. The Fe cation site is built by H373, H378, H553, and I676.

Belongs to the lipoxygenase family. Requires Fe cation as cofactor. In terms of tissue distribution, expressed in hair, prostate, lung, ovary, lymph node, spinal cord and cornea.

The protein resides in the nucleus. The protein localises to the cytoplasm. It localises to the cytosol. Its subcellular location is the cell membrane. It is found in the cytoskeleton. The protein resides in the membrane. The protein localises to the cell junction. It localises to the adherens junction. Its subcellular location is the focal adhesion. The catalysed reaction is (5Z,8Z,11Z,14Z)-eicosatetraenoate + O2 = (15S)-hydroperoxy-(5Z,8Z,11Z,13E)-eicosatetraenoate. It carries out the reaction (9Z,12Z)-octadecadienoate + O2 = 13-hydroperoxy-(9Z,11E)-octadecadienoate. It catalyses the reaction (5S)-hydroxy-(6E,8Z,11Z,14Z)-eicosatetraenoate + O2 = (5S)-hydroxy-(15S)-hydroperoxy-(6E,8Z,11Z,13E)-eicosatetraenoate. The enzyme catalyses (5Z,8Z,11Z,14Z)-eicosatetraenoate + O2 = 5-hydroperoxy-(6E,8Z,11Z,14Z)-eicosatetraenoate. The catalysed reaction is (5S,6R)-dihydroxy-(7E,9E,11Z,14Z)-eicosatetraenoate + O2 = (5S,6R)-dihydroxy-(15S)-hydroperoxy-(7E,9E,11Z,13E)-eicosatetraenoate. It carries out the reaction (5S)-hydroperoxy-(6E,8Z,11Z,14Z)-eicosatetraenoate + O2 = (5S,15S)-dihydroperoxy-(6E,8Z,11Z,13E)-eicosatetraenoate. It catalyses the reaction 2-(5Z,8Z,11Z,14Z-eicosatetraenoyl)-glycerol + O2 = 2-[15(S)-hydroperoxy-(5Z,8Z,11Z,13E)-eicosatetraenoyl]-glycerol. The enzyme catalyses (8S)-hydroperoxy-(5Z,9E,11Z,14Z)-eicosatetraenoate + O2 = (8S,15S)-dihydroperoxy-(5Z,9E,11Z,13E)-eicosatetraenoate. The catalysed reaction is N-(5Z,8Z,11Z,14Z)-eicosatetraenoyl-L-alanine + O2 = N-(15S)-hydroperoxy-(5Z,8Z,11Z,13E)-eicosatetraenoyl-alanine. It carries out the reaction N-(5Z,8Z,11Z,14Z)-eicosatetraenoyl-gamma-aminobutanoate + O2 = N-(15S)-hydroperoxy-(5Z,8Z,11Z,13E)-eicosatetraenoyl-gamma-aminobutanoate. It catalyses the reaction N-(5Z,8Z,11Z,14Z)-eicosatetraenoyl-glycine + O2 = N-(15S)-hydroperoxy-(5Z,8Z,11Z,13E)-eicosatetraenoyl-glycine. The enzyme catalyses N-(5Z,8Z,11Z,14Z)-eicosatetraenoyl-taurine + O2 = N-(15S)-hydroperoxy-(5Z,8Z,11Z,13E)-eicosatetraenoyl-taurine. The catalysed reaction is 2-(5Z,8Z,11Z,14Z-eicosatetraenoyl)-glycerol + O2 = 2-[12-hydroperoxy-(5Z,8Z,10E,14Z)-eicosatetraenoyl]-glycerol. It carries out the reaction 1-octadecanoyl-2-(5Z,8Z,11Z,14Z-eicosatetraenoyl)-sn-glycero-3-phosphocholine + O2 = 1-octadecanoyl-2-(15-hydroperoxy-5Z,8Z,11Z,13E-eicosatetraenoyl)-sn-glycero-3-phosphocholine. It catalyses the reaction a 1-acyl-2-(5Z,8Z,11Z,14Z-eicosatetraenoyl)-sn-glycero-3-phospho-(1D-myo-inositol) + O2 = a 1-acyl-2-(15-hydroperoxy-5Z,8Z,11Z,13E-eicosatetraenoyl)-sn-glycero-3-phospho-(1D-myo-inositol). The enzyme catalyses a 1-acyl-2-(8Z,11Z,14Z-eicosatrienoyl)-sn-glycero-3-phospho-(1D-myo-inositol) + O2 = a 1-acyl-2-(15-hydroperoxy-8Z,11Z,13E-eicosatrienoyl)-sn-glycero-3-phospho-(1D-myo-inositol). The catalysed reaction is 1-octadecanoyl-2-(5Z,8Z,11Z,14Z)-eicosatetraenoyl-sn-glycero-3-phosphoethanolamine + O2 = 1-octadecanoyl-2-(15-hydroperoxy-5Z,8Z,11Z,13E-eicosatetraenoyl)-sn-glycero-3-phosphoethanolamine. It carries out the reaction 1-octadecanoyl-2-(5Z,8Z,11Z,14Z-eicosatetraenoyl)-sn-glycero-3-phospho-(1D-myo-inositol) + O2 = 1-octadecanoyl-2-(15-hydroperoxy-5Z,8Z,11Z,13E-eicosatetraenoyl)-sn-glycero-3-phospho-(1D-myo-inositol). It catalyses the reaction (8Z,11Z,14Z)-eicosatrienoate + O2 = 15-hydroperoxy-(8Z,11Z,13E)-eicosatrienoate. The enzyme catalyses (7S)-hydroperoxy-(4Z,8E,10Z,13Z,16Z,19Z)-docosahexaenoate + O2 = (7S,17S)-dihydroperoxy-(4Z,8E,10Z,13Z,15E,19Z)-docosahexaenoate. The catalysed reaction is (5Z,8Z,11Z,14Z)-eicosatetraenoate + O2 = 15-hydroperoxy-(5Z,8Z,11Z,13E)-eicosatetraenoate. The protein operates within lipid metabolism; hydroperoxy eicosatetraenoic acid biosynthesis. Non-heme iron-containing dioxygenase that catalyzes the stereo-specific peroxidation of free and esterified polyunsaturated fatty acids (PUFAs) generating a spectrum of bioactive lipid mediators. It inserts peroxyl groups at C15 of arachidonate ((5Z,8Z,11Z,14Z)-eicosatetraenoate) producing (15S)-hydroperoxyeicosatetraenoate/(15S)-HPETE. Also peroxidizes linoleate ((9Z,12Z)-octadecadienoate) to 13-hydroperoxyoctadecadienoate/13-HPODE. Oxygenates arachidonyl derivatives such as 2-arachidonoylglycerol (2-AG) leading to the production and extracellular release of 15-hydroxyeicosatetraenoyl glycerol (15-HETE-G) that acts as a peroxisome proliferator-activated receptor alpha agonist. Has the ability to efficiently class-switch ALOX5 pro-inflammatory mediators into anti-inflammatory intermediates. Participates in the sequential oxidations of DHA ((4Z,7Z,10Z,13Z,16Z,19Z)-docosahexaenoate) to generate specialized pro-resolving mediators (SPMs) resolvin D5 ((7S,17S)-diHPDHA), which can actively down-regulate the immune response and have anti-aggregation properties with platelets. In addition to free PUFAs hydrolyzed from phospholipids, it directly oxidizes PUFAs esterified to membrane-bound phospholipids. Has no detectable 8S-lipoxygenase activity on arachidonate but reacts with (8S)-HPETE to produce (8S,15S)-diHPETE. May regulate progression through the cell cycle and cell proliferation. May also regulate cytokine secretion by macrophages and therefore play a role in the immune response. May also regulate macrophage differentiation into proatherogenic foam cells. In terms of biological role, does not convert arachidonic acid to 15S-hydroperoxyeicosatetraenoic acid/(15S)-HPETE. The polypeptide is Polyunsaturated fatty acid lipoxygenase ALOX15B (Homo sapiens (Human)).